Consider the following 707-residue polypeptide: Matrix metalloproteinase-9 (707 aa).

The signal sequence occupies residues 1 to 19 (MSPRQPLVLALLVLGCCSA). Positions 20-106 (APRRRQPTLV…PRCGVPDVGK (87 aa)) are cleaved as a propeptide — activation peptide. The N-linked (GlcNAc...) asparagine glycan is linked to N88. The Cysteine switch signature appears at 97 to 104 (PRCGVPDV). Residue C99 coordinates Zn(2+). N-linked (GlcNAc...) asparagine glycans are attached at residues N120 and N127. Residues D131 and D165 each contribute to the Ca(2+) site. Zn(2+) is bound by residues H175 and D177. 4 residues coordinate Ca(2+): D182, G183, D185, and L187. Residue H190 participates in Zn(2+) binding. Ca(2+)-binding residues include G197, Q199, and D201. H203 lines the Zn(2+) pocket. The Ca(2+) site is built by D205, D206, and E208. Fibronectin type-II domains lie at 225–273 (ADGA…FCPS), 283–331 (ADGK…FCPT), and 342–390 (SAGE…FCPD). Disulfide bonds link C230-C256, C244-C271, C288-C314, C302-C329, C347-C373, and C361-C388. Residue H401 participates in Zn(2+) binding. E402 is a catalytic residue. 2 residues coordinate Zn(2+): H405 and H411. The interval 437-508 (RGIQHLYGPN…ASPSAAPTAS (72 aa)) is disordered. Residues 446–467 (NPNPQPPATTTPEPQPTAPPTA) are compositionally biased toward pro residues. Low complexity predominate over residues 481–493 (PTTSPTGAPSAGP). An intrachain disulfide couples C516 to C704. Hemopexin repeat units lie at residues 518-563 (VNVF…WPAL), 564-608 (PAKL…GLGP), 610-657 (VPHV…FPGV), and 658-704 (PLNT…ILHC).

This sequence belongs to the peptidase M10A family. As to quaternary structure, exists as monomer or homodimer; disulfide-linked. Also exists as heterodimer with LCN2. Macrophages and transformed cell lines produce only the monomeric form. Interacts with ECM1. The cofactor is Zn(2+). Requires Ca(2+) as cofactor. N- and O-glycosylated. In terms of tissue distribution, osteoclasts.

Its subcellular location is the secreted. It localises to the extracellular space. It is found in the extracellular matrix. The catalysed reaction is Cleavage of gelatin types I and V and collagen types IV and V.. Matrix metalloproteinase that plays an essential role in local proteolysis of the extracellular matrix and in leukocyte migration. Could play a role in bone osteoclastic resorption. Cleaves KiSS1 at a Gly-|-Leu bond. Cleaves NINJ1 to generate the Secreted ninjurin-1 form. Cleaves type IV and type V collagen into large C-terminal three quarter fragments and shorter N-terminal one quarter fragments. Degrades fibronectin but not laminin or Pz-peptide. The sequence is that of Matrix metalloproteinase-9 from Oryctolagus cuniculus (Rabbit).